Consider the following 317-residue polypeptide: Taste receptor type 2 member 14 (317 aa).

Residues methionine 1–serine 7 are Extracellular-facing. A helical transmembrane segment spans residues isoleucine 8–alanine 28. Over leucine 29–arginine 55 the chain is Cytoplasmic. The helical transmembrane segment at isoleucine 56–phenylalanine 76 threads the bilayer. At alanine 77–asparagine 87 the chain is on the extracellular side. Positions 86 and 89 each coordinate cholesterol. A helical membrane pass occupies residues isoleucine 88–phenylalanine 108. At leucine 109 to valine 129 the chain is on the cytoplasmic side. The helical transmembrane segment at valine 130 to isoleucine 150 threads the bilayer. At histidine 151–threonine 184 the chain is on the extracellular side. N-linked (GlcNAc...) asparagine glycans are attached at residues asparagine 153, asparagine 162, and asparagine 171. Position 180 (valine 180) interacts with cholesterol. Residues valine 185–methionine 205 form a helical membrane-spanning segment. Topologically, residues tryptophan 206–serine 232 are cytoplasmic. Residues valine 233 to threonine 253 traverse the membrane as a helical segment. Residues serine 254–leucine 261 are Extracellular-facing. The chain crosses the membrane as a helical span at residues isoleucine 262–leucine 282. Residues serine 265 and methionine 268 each coordinate cholesterol. Residues glycine 283–serine 317 are Cytoplasmic-facing.

This sequence belongs to the G-protein coupled receptor T2R family. Core component of the TAS2R14-GNAI1 complex, consisting of TAS2R14, GNAI1, GNB1 and GNG2; within the complex interacts with GNAI1. Core component of the TAS2R14-GNAT3 complex, consisting of TAS2R14, GNAT3, GNB1 and GNG2; within the complex interacts with GNAT3. Core component of the TAS2R14-GNAS2 complex, consisting of TAS2R14, GNAS2, GNB1 and GNG2; within the complex interacts with GNAS2. In terms of tissue distribution, highly expressed in cerebellum, pancreas, small intestine and thymus; also expressed in adipose, aorta, skin and tongue, but at significantly lower levels. Expressed in subsets of taste receptor cells of the tongue and palate epithelium and exclusively in gustducin-positive cells. Expressed in testis.

It is found in the membrane. The catalysed reaction is Ca(2+)(in) = Ca(2+)(out). The enzyme catalyses 3',5'-cyclic AMP(in) = 3',5'-cyclic AMP(out). Basal activity is enhanced by binding to bitter tastants, such as flufenamic acid and aristolochic acid. Regulated by cholesterol in a concentration-dependent manner. Functionally, gustducin-linked G-protein coupled receptor that plays a role in the perception of bitterness. The activity of this receptor stimulates GNAT3, activating the gustducin G-protein pathway. Likely plays a role in sensing the chemical composition of the gastrointestinal content and other extra-oral tissues via the inhibitory G-protein pathways. The sequence is that of Taste receptor type 2 member 14 (TAS2R14) from Homo sapiens (Human).